Here is a 53-residue protein sequence, read N- to C-terminus: Ovomucoid (53 aa).

In terms of domain architecture, Kazal-like spans V3–C53. 3 disulfide bridges follow: C5-C35, C13-C32, and C21-C53. N42 carries an N-linked (GlcNAc...) asparagine glycan.

The protein resides in the secreted. The protein is Ovomucoid of Turnix sylvaticus (Common buttonquail).